Here is a 604-residue protein sequence, read N- to C-terminus: Prostaglandin G/H synthase 2 (604 aa).

The signal sequence occupies residues 1 to 17 (MLARAGLLCASLSPPHA). Residues 18–55 (ANPCCSNPCQNQGVCMSIGFDQYMCDCSRTGFYGENCS) enclose the EGF-like domain. Cystine bridges form between cysteine 21–cysteine 32, cysteine 22–cysteine 145, cysteine 26–cysteine 42, and cysteine 44–cysteine 54. An N-linked (GlcNAc...) asparagine glycan is attached at asparagine 53. Arginine 106 provides a ligand contact to substrate. Asparagine 130 is a glycosylation site (N-linked (GlcNAc...) asparagine). Histidine 193 functions as the Proton acceptor in the catalytic mechanism. Tyrosine 341 contacts substrate. Catalysis depends on tyrosine 371, which acts as the For cyclooxygenase activity. Histidine 374 lines the heme b pocket. The N-linked (GlcNAc...) asparagine glycan is linked to asparagine 396. Cysteine 526 bears the S-nitrosocysteine mark. Cysteine 555 and cysteine 561 are joined by a disulfide. Asparagine 580 is a glycosylation site (N-linked (GlcNAc...) asparagine).

The protein belongs to the prostaglandin G/H synthase family. In terms of assembly, homodimer. Heme b is required as a cofactor. Post-translationally, S-nitrosylation by NOS2 (iNOS) activates enzyme activity. S-nitrosylation may take place on different Cys residues in addition to Cys-526.

It is found in the microsome membrane. Its subcellular location is the endoplasmic reticulum membrane. The protein resides in the nucleus inner membrane. The protein localises to the nucleus outer membrane. It catalyses the reaction (5Z,8Z,11Z,14Z)-eicosatetraenoate + AH2 + 2 O2 = prostaglandin H2 + A + H2O. The catalysed reaction is (5Z,8Z,11Z,14Z)-eicosatetraenoate + 2 O2 = prostaglandin G2. The enzyme catalyses prostaglandin G2 + AH2 = prostaglandin H2 + A + H2O. It carries out the reaction (5Z,8Z,11Z,14Z,17Z)-eicosapentaenoate + 2 O2 = prostaglandin G3. It catalyses the reaction prostaglandin G3 + AH2 = prostaglandin H3 + A + H2O. The catalysed reaction is (8Z,11Z,14Z)-eicosatrienoate + 2 O2 = prostaglandin G1. The enzyme catalyses prostaglandin G1 + AH2 = prostaglandin H1 + A + H2O. It carries out the reaction 2-(5Z,8Z,11Z,14Z)-eicosatetraenoyl-sn-glycero-3-phosphoethanolamine + 2 O2 = 2-(prostaglandin G2)-sn-glycero-3-phosphoethanolamine. It catalyses the reaction 2-(prostaglandin G2)-sn-glycero-3-phosphoethanolamine + AH2 = 2-(prostaglandin H2)-sn-glycero-3-phosphoethanolamine + A + H2O. The catalysed reaction is 2-(5Z,8Z,11Z,14Z)-eicosatetraenoyl-sn-glycero-3-phosphocholine + 2 O2 = 2-(prostaglandin G2)-sn-glycero-3-phosphocholine. The enzyme catalyses 2-(prostaglandin G2)-sn-glycero-3-phosphocholine + AH2 = 2-(prostaglandin H2)-sn-glycero-3-phosphocholine + A + H2O. It carries out the reaction (15S)-hydroperoxy-(5Z,8Z,11Z,13E)-eicosatetraenoate + AH2 = (15S)-hydroxy-(5Z,8Z,11Z,13E)-eicosatetraenoate + A + H2O. It catalyses the reaction 2-(5Z,8Z,11Z,14Z)-eicosatetraenoyl-sn-glycero-3-phosphocholine + AH2 + O2 = 2-[(15S)-hydroxy-(5Z,8Z,11Z,13E)-eicosatetraenoyl]-sn-glycero-3-phosphocholine + A + H2O. The catalysed reaction is 2-(5Z,8Z,11Z,14Z)-eicosatetraenoyl-sn-glycero-3-phosphocholine + AH2 + O2 = 2-[(15R)-hydroxy-(5Z,8Z,11Z,13E)-eicosatetraenoyl]-sn-glycero-3-phosphocholine + A + H2O. The enzyme catalyses 2-(5Z,8Z,11Z,14Z)-eicosatetraenoyl-sn-glycero-3-phosphocholine + AH2 + O2 = 2-[(11R)-hydroxy-(5Z,8Z,12E,14Z)-eicosatetraenoyl]-sn-glycero-3-phosphocholine + A + H2O. It carries out the reaction (9Z,12Z)-octadecadienoate + AH2 + O2 = 9-hydroxy-(10E,12Z)-octadecadienoate + A + H2O. It catalyses the reaction (9Z,12Z)-octadecadienoate + AH2 + O2 = 13-hydroxy-(9Z,11E)-octadecadienoate + A + H2O. The catalysed reaction is (5Z,8Z,11Z,14Z)-eicosatetraenoate + AH2 + O2 = (15R)-hydroxy-(5Z,8Z,11Z,13E)-eicosatetraenoate + A + H2O. The enzyme catalyses (5Z,8Z,11Z,14Z)-eicosatetraenoate + AH2 + O2 = (11R)-hydroxy-(5Z,8Z,12E,14Z)-eicosatetraenoate + A + H2O. It carries out the reaction (5Z,8Z,11Z,14Z,17Z)-eicosapentaenoate + AH2 + O2 = (11R)-hydroxy-(5Z,8Z,12E,14Z,17Z)-eicosapentaenoate + A + H2O. It catalyses the reaction (5Z,8Z,11Z,14Z,17Z)-eicosapentaenoate + AH2 + O2 = (18S)-hydroxy-(5Z,8Z,11Z,14Z,16E)-eicosapentaenoate + A + H2O. The catalysed reaction is (5Z,8Z,11Z,14Z,17Z)-eicosapentaenoate + AH2 + O2 = (18R)-hydroxy-(5Z,8Z,11Z,14Z,16E)-eicosapentaenoate + A + H2O. The enzyme catalyses (5Z,8Z,11Z,14Z,17Z)-eicosapentaenoate + AH2 + O2 = (15R)-hydroxy-(5Z,8Z,11Z,13E,17Z)-eicosapentaenoate + A + H2O. It carries out the reaction (5Z,8Z,11Z,14Z,17Z)-eicosapentaenoate + AH2 + O2 = (15S)-hydroxy-(5Z,8Z,11Z,13E,17Z)-eicosapentaenoate + A + H2O. It catalyses the reaction (7Z,10Z,13Z,16Z,19Z)-docosapentaenoate + AH2 + O2 = 13R-hydroxy-(7Z,10Z,14E,16Z,19Z)-docosapentaenoate + A + H2O. The catalysed reaction is (4Z,7Z,10Z,13Z,16Z,19Z)-docosahexaenoate + AH2 + O2 = 13-hydroxy-(4Z,7Z,10Z,14E,16Z,19Z)-docosahexaenoate + A + H2O. The enzyme catalyses (5S)-hydroxy-(6E,8Z,11Z,14Z)-eicosatetraenoate + AH2 + O2 = (5S,15R)-dihydroxy-(6E,8Z,11Z,13E)-eicosatetraenoate + A + H2O. It carries out the reaction (4Z,7Z,10Z,13Z,16Z,19Z)-docosahexaenoate + AH2 + O2 = 17R-hydroxy-(4Z,7Z,10Z,13Z,15E,19Z)-docosahexaenoate + A + H2O. It catalyses the reaction (5S)-hydroxy-(6E,8Z,11Z,14Z)-eicosatetraenoate + AH2 + O2 = (5S,15S)-dihydroxy-(6E,8Z,11Z,13E)-eicosatetraenoate + A + H2O. The catalysed reaction is (5S)-hydroxy-(6E,8Z,11Z,14Z)-eicosatetraenoate + AH2 + O2 = (5S,11R)-dihydroxy-(6E,8Z,12E,14Z)-eicosatetraenoate + A + H2O. The enzyme catalyses 2-(5Z,8Z,11Z,14Z-eicosatetraenoyl)-glycerol + 2 O2 = 2-glyceryl-prostaglandin G2. It carries out the reaction 2-glyceryl-prostaglandin G2 + AH2 = 2-glyceryl-prostaglandin H2 + A + H2O. It catalyses the reaction (5Z,8Z,11Z,14Z)-eicosatetraenoate + O2 = (15R)-hydroperoxy-(5Z,8Z,11Z,13E)-eicosatetraenoate. The catalysed reaction is (5Z,8Z,11Z,14Z)-eicosatetraenoate + O2 = 11R-hydroperoxy-(5Z,8Z,12E,14Z)-eicosatetraenoate. The enzyme catalyses (9Z,12Z)-octadecadienoate + AH2 + O2 = (9R)-hydroxy-(10E,12Z)-octadecadienoate + A + H2O. It carries out the reaction (9Z,12Z)-octadecadienoate + AH2 + O2 = (9S)-hydroxy-(10E,12Z)-octadecadienoate + A + H2O. It catalyses the reaction (9Z,12Z)-octadecadienoate + AH2 + O2 = (13S)-hydroxy-(9Z,11E)-octadecadienoate + A + H2O. The catalysed reaction is (9Z,12Z)-octadecadienoate + AH2 + O2 = (13R)-hydroxy-(9Z,11E)-octadecadienoate + A + H2O. Its pathway is lipid metabolism; prostaglandin biosynthesis. Its function is as follows. Dual cyclooxygenase and peroxidase in the biosynthesis pathway of prostanoids, a class of C20 oxylipins mainly derived from arachidonate ((5Z,8Z,11Z,14Z)-eicosatetraenoate, AA, C20:4(n-6)), with a particular role in the inflammatory response. The cyclooxygenase activity oxygenates AA to the hydroperoxy endoperoxide prostaglandin G2 (PGG2), and the peroxidase activity reduces PGG2 to the hydroxy endoperoxide prostaglandin H2 (PGH2), the precursor of all 2-series prostaglandins and thromboxanes. This complex transformation is initiated by abstraction of hydrogen at carbon 13 (with S-stereochemistry), followed by insertion of molecular O2 to form the endoperoxide bridge between carbon 9 and 11 that defines prostaglandins. The insertion of a second molecule of O2 (bis-oxygenase activity) yields a hydroperoxy group in PGG2 that is then reduced to PGH2 by two electrons. Similarly catalyzes successive cyclooxygenation and peroxidation of dihomo-gamma-linoleate (DGLA, C20:3(n-6)) and eicosapentaenoate (EPA, C20:5(n-3)) to corresponding PGH1 and PGH3, the precursors of 1- and 3-series prostaglandins. In an alternative pathway of prostanoid biosynthesis, converts 2-arachidonoyl lysophopholipids to prostanoid lysophopholipids, which are then hydrolyzed by intracellular phospholipases to release free prostanoids. Metabolizes 2-arachidonoyl glycerol yielding the glyceryl ester of PGH2, a process that can contribute to pain response. Generates lipid mediators from n-3 and n-6 polyunsaturated fatty acids (PUFAs) via a lipoxygenase-type mechanism. Oxygenates PUFAs to hydroperoxy compounds and then reduces them to corresponding alcohols. Plays a role in the generation of resolution phase interaction products (resolvins) during both sterile and infectious inflammation. Metabolizes docosahexaenoate (DHA, C22:6(n-3)) to 17R-HDHA, a precursor of the D-series resolvins (RvDs). As a component of the biosynthetic pathway of E-series resolvins (RvEs), converts eicosapentaenoate (EPA, C20:5(n-3)) primarily to 18S-HEPE that is further metabolized by ALOX5 and LTA4H to generate 18S-RvE1 and 18S-RvE2. In vascular endothelial cells, converts docosapentaenoate (DPA, C22:5(n-3)) to 13R-HDPA, a precursor for 13-series resolvins (RvTs) shown to activate macrophage phagocytosis during bacterial infection. In activated leukocytes, contributes to oxygenation of hydroxyeicosatetraenoates (HETE) to diHETES (5,15-diHETE and 5,11-diHETE). Can also use linoleate (LA, (9Z,12Z)-octadecadienoate, C18:2(n-6)) as substrate and produce hydroxyoctadecadienoates (HODEs) in a regio- and stereospecific manner, being (9R)-HODE ((9R)-hydroxy-(10E,12Z)-octadecadienoate) and (13S)-HODE ((13S)-hydroxy-(9Z,11E)-octadecadienoate) its major products. During neuroinflammation, plays a role in neuronal secretion of specialized preresolving mediators (SPMs) 15R-lipoxin A4 that regulates phagocytic microglia. The sequence is that of Prostaglandin G/H synthase 2 (PTGS2) from Neovison vison (American mink).